Reading from the N-terminus, the 141-residue chain is Putative pre-16S rRNA nuclease (141 aa).

Belongs to the YqgF nuclease family.

The protein localises to the cytoplasm. Functionally, could be a nuclease involved in processing of the 5'-end of pre-16S rRNA. The chain is Putative pre-16S rRNA nuclease from Aliivibrio fischeri (strain ATCC 700601 / ES114) (Vibrio fischeri).